The primary structure comprises 416 residues: Phakinin (416 aa).

The interval 1-48 (MSERRVAMDLPSGSNASMPLQRHRVSSLRGTRSPSSLDSPPASRTSAV) is disordered. S2 is modified (N-acetylserine). The tract at residues 2–115 (SERRVAMDLP…HATAEDLGGC (114 aa)) is head. 4 positions are modified to phosphoserine: S27, S33, S36, and S91. Polar residues predominate over residues 28-48 (LRGTRSPSSLDSPPASRTSAV). The IF rod domain maps to 105–416 (NHATAEDLGG…HALLDREESN (312 aa)). Coiled coils occupy residues 199-240 (FRKA…SLSR) and 314-391 (LAAA…ERAH). Residues 397-416 (GQLQKDVASYHALLDREESN) form a tail region.

The protein belongs to the intermediate filament family. In terms of assembly, part of a complex required for lens intermediate filament formation composed of BFSP1, BFSP2, and CRYAA. Found in a complex composed of PPL (via C-terminal linker domain), BFSP1 and BFSP2 in the retinal lens. Within the complex interacts with PPL (via C-terminal linker domain) and with BFSP1. Identified in a complex that contains VIM, EZR, AHNAK, BFSP1, BFSP2, ANK2, PLEC, PRX and spectrin. Interacts with LGSN. Interacts with VIM. In terms of tissue distribution, expressed in the deep and shallow cortices of the retina lens (at protein level).

Its subcellular location is the cell membrane. It localises to the cytoplasm. The protein resides in the cytoskeleton. The protein localises to the cell cortex. Required for the correct formation of lens intermediate filaments as part of a complex composed of BFSP1, BFSP2 and CRYAA. Plays a role in maintenance of retinal lens optical clarity. The polypeptide is Phakinin (Rattus norvegicus (Rat)).